Consider the following 430-residue polypeptide: Serine--tRNA ligase (430 aa).

Residue 237-239 (TAE) coordinates L-serine. 268–270 (RSE) provides a ligand contact to ATP. Residue glutamate 291 participates in L-serine binding. 355-358 (EISS) contributes to the ATP binding site. Serine 391 contributes to the L-serine binding site.

Belongs to the class-II aminoacyl-tRNA synthetase family. Type-1 seryl-tRNA synthetase subfamily. In terms of assembly, homodimer. The tRNA molecule binds across the dimer.

The protein resides in the cytoplasm. The catalysed reaction is tRNA(Ser) + L-serine + ATP = L-seryl-tRNA(Ser) + AMP + diphosphate + H(+). The enzyme catalyses tRNA(Sec) + L-serine + ATP = L-seryl-tRNA(Sec) + AMP + diphosphate + H(+). Its pathway is aminoacyl-tRNA biosynthesis; selenocysteinyl-tRNA(Sec) biosynthesis; L-seryl-tRNA(Sec) from L-serine and tRNA(Sec): step 1/1. Its function is as follows. Catalyzes the attachment of serine to tRNA(Ser). Is also able to aminoacylate tRNA(Sec) with serine, to form the misacylated tRNA L-seryl-tRNA(Sec), which will be further converted into selenocysteinyl-tRNA(Sec). This Klebsiella pneumoniae (strain 342) protein is Serine--tRNA ligase.